The sequence spans 439 residues: MAFVDQAQIEVKAGKGGDGIVSFRHEKFVAMGGPFGGDGGHGGSIIFKVDEGLRTLMDFRYNRHFKAQPGGNGGTKGMTGASADNRVVKVPQGTTVSDADTGEVLADMLENGQELVVAKGGRGGRGNIHFATPANPAPELSENGEPGQIRNLKLELKVLADVGLVGFPSAGKSTLLSVVSNAKPKVAAYHFTTLSPNIGMVRLDDDRDFVMADLPGLIEGASQGIGLGFQFLRHVERTKVILHLVDMSGIEGTDPYTQYRKILDELQQYDETILNRPQIVVPTKMDMPDSEENLAKFRKEVATDSGLPIQPEIVPISSITRDGVKDLMRLTADMLATAPAPESYRPETKNDTSEKSYTFKPETHDFTVEWIADEERWLLSGAEIEKLFLMTNIQRDATIMRFARQLRHMGVDDKLREAGAKDGDDVRINNSDFVFEFSE.

The 159-residue stretch at 1-159 folds into the Obg domain; that stretch reads MAFVDQAQIE…RNLKLELKVL (159 aa). An OBG-type G domain is found at 160 to 336; sequence ADVGLVGFPS…LMRLTADMLA (177 aa). Residues 166–173, 191–195, 213–216, 283–286, and 317–319 each bind GTP; these read GFPSAGKS, FTTLS, DLPG, TKMD, and SSI. S173 and T193 together coordinate Mg(2+). The interval 338–357 is disordered; that stretch reads APAPESYRPETKNDTSEKSY. The span at 344–354 shows a compositional bias: basic and acidic residues; that stretch reads YRPETKNDTSE. Residues 358–439 form the OCT domain; that stretch reads TFKPETHDFT…NSDFVFEFSE (82 aa).

It belongs to the TRAFAC class OBG-HflX-like GTPase superfamily. OBG GTPase family. As to quaternary structure, monomer. Requires Mg(2+) as cofactor.

It is found in the cytoplasm. Its function is as follows. An essential GTPase which binds GTP, GDP and possibly (p)ppGpp with moderate affinity, with high nucleotide exchange rates and a fairly low GTP hydrolysis rate. Plays a role in control of the cell cycle, stress response, ribosome biogenesis and in those bacteria that undergo differentiation, in morphogenesis control. The chain is GTPase Obg from Leuconostoc mesenteroides subsp. mesenteroides (strain ATCC 8293 / DSM 20343 / BCRC 11652 / CCM 1803 / JCM 6124 / NCDO 523 / NBRC 100496 / NCIMB 8023 / NCTC 12954 / NRRL B-1118 / 37Y).